The primary structure comprises 2214 residues: Non-reducing polyketide synthase dpmpA (2214 aa).

Residues Glu-75–Asp-178 are N-terminal acylcarrier protein transacylase domain (SAT). Residues Asp-372–Gln-784 form the Ketosynthase family 3 (KS3) domain. Active-site for beta-ketoacyl synthase activity residues include Cys-532, His-667, and His-707. Residues Val-888–Pro-1184 are malonyl-CoA:ACP transacylase (MAT) domain. The For acyl/malonyl transferase activity role is filled by Ser-974. Positions Pro-1255–Arg-1389 are N-terminal hotdog fold. Residues Pro-1255–Gln-1566 form the PKS/mFAS DH domain. Positions Gly-1265–Val-1560 are product template (PT) domain. The interval Gly-1416–Gln-1566 is C-terminal hotdog fold. 2 consecutive Carrier domains span residues Asn-1620–Leu-1695 and Lys-1722–Asp-1802. Ser-1654 carries the post-translational modification O-(pantetheine 4'-phosphoryl)serine. Positions Val-1698–Gln-1728 are disordered. Over residues Asp-1711–Gln-1726 the composition is skewed to polar residues. Ser-1762 carries the O-(pantetheine 4'-phosphoryl)serine modification. A disordered region spans residues Gly-1805 to Lys-1827. Over residues Ser-1810–Lys-1827 the composition is skewed to basic and acidic residues. Positions Phe-1958–Ile-2210 are methyltransferase (CMeT) domain.

The protein operates within secondary metabolite biosynthesis; terpenoid biosynthesis. Non-reducing polyketide synthase; part of the gene cluster that mediates the biosynthesis of diterpenoid pyrones. The first step of the pathway is the synthesis of the alpha-pyrone moiety by the polyketide synthase dpmpA via condensation of one acetyl-CoA starter unit with 3 malonyl-CoA units and 2 methylations. The alpha-pyrone is then combined with geranylgeranyl pyrophosphate (GGPP) formed by the GGPP synthase dpmpD through the action of the prenyltransferase dpmpC to yield a linear alpha-pyrone diterpenoid. Subsequent steps in the diterpenoid pyrone biosynthetic pathway involve the decalin core formation, which is initiated by the epoxidation of the C10-C11 olefin by the FAD-dependent oxidoreductase dpmpE, and is followed by a cyclization cascade catalyzed by the terpene cyclase dpmpB. The short chain dehydrogenase/reductase dpmpG then oxidizes the 8S hydroxy group to a ketone and the short chain dehydrogenase/reductase dpmpH reduces the ketone to the 8R hydroxy group to yield higginsianin B. Higginsianin B is further methylated by the methyltransferase dpmpI to produce the intermediate named FDDP B. The cytochrome P450 monooxygenase dpmpJ then oxidizes the C-26 methyl to primary alcohol, producing the final diterpenoid pyrone with a C-26 primary alcohol on the gamma-pyrone moiety named FDDP C. The polypeptide is Non-reducing polyketide synthase dpmpA (Macrophomina phaseolina (strain MS6) (Charcoal rot fungus)).